A 109-amino-acid chain; its full sequence is MMLRKPKKVIELFIASSLSKKKQTEPQAEQDHYFWLSSSHLFIFESSTIKKKQNTLRTLCNQPHKMQNLFFKQKIQLYIDTSLSFLLLLFFYFNNYYFLSMTYASLVNK.

The chain crosses the membrane as a helical span at residues 82–102 (SLSFLLLLFFYFNNYYFLSMT).

Its subcellular location is the membrane. This is an uncharacterized protein from Saccharomyces cerevisiae (strain ATCC 204508 / S288c) (Baker's yeast).